Here is a 400-residue protein sequence, read N- to C-terminus: MPLWGLLLALWGCSTFSLPADTAAFRRIFLKKMPSVRESLKERGVDMAQLGAEWSQLTKTLSFGNRTSPVVLTNYLDTQYYGEIGIGTPPQTFKVIFDTGSANLWVPSTKCSPLYTACEIHSLYDSLESSSYVENGTEFTIYYGSGKVKGFLSQDLVTVGGITVTQTFGEVTELPLRPFMLAKFDGVLGMGFPAQAVGGVTPVFDHILAQRVLTEDVFSVYYSRDSKNSHLLGGEIVLGGSDPQYYQENFHYVSISKPGSWQIRMKGVSVRSTTLLCEEGCMVVVDTGASYISGPTSSLRLLMEALGAKELSIDEYVVNCNQMPTLPDISFHLGGKAYTLTSADYVLQDPYNNISCTLALHGMDIPPPTGPVWVLGATFIRKFYTEFDRRNNRIGFALAR.

The first 17 residues, 1 to 17, serve as a signal peptide directing secretion; that stretch reads MPLWGLLLALWGCSTFS. Positions 18-59 are cleaved as a propeptide — activation peptide; that stretch reads LPADTAAFRRIFLKKMPSVRESLKERGVDMAQLGAEWSQLTK. Asn65 is a glycosylation site (N-linked (GlcNAc...) asparagine). Residues 80–397 enclose the Peptidase A1 domain; sequence YYGEIGIGTP…DRRNNRIGFA (318 aa). Asp98 is a catalytic residue. A disulfide bridge links Cys111 with Cys118. An N-linked (GlcNAc...) asparagine glycan is attached at Asn135. Cys277 and Cys281 are oxidised to a cystine. The active site involves Asp286. An intrachain disulfide couples Cys320 to Cys356. Asn353 carries an N-linked (GlcNAc...) asparagine glycan.

This sequence belongs to the peptidase A1 family. In terms of assembly, interacts with ATP6AP2. Kidney.

It is found in the secreted. Its subcellular location is the membrane. It catalyses the reaction Cleavage of Leu-|-Xaa bond in angiotensinogen to generate angiotensin I.. Interaction with ATP6AP2 results in a 5-fold increased efficiency in angiotensinogen processing. Its function is as follows. Renin is a highly specific endopeptidase, whose only known function is to generate angiotensin I from angiotensinogen in the plasma, initiating a cascade of reactions that produce an elevation of blood pressure and increased sodium retention by the kidney. This is Renin (REN) from Ovis aries (Sheep).